The following is a 772-amino-acid chain: MAEMADKAKVEEMDWEGIDGVRMTWNLWPRTKVEASKCVIPLAASISPIRRHPLILDLPYAPLDCKTCKALLNAFARVDFAAMNWVCPFCYHRNHFPSHYHSISEINLPGELYPQYTTVEYTLPPDPSRVPPPPVFVFVLDTCMIEEELGYAKSALKQAIGLLPENALVGFVSFGTQAHVHELGFSEMSKVFVFKGNKEVTKDQILDQLGLGSSSRRAPTSGFSKGAQNGFQSSGVDRFLLPASECEYTLDLLLDELQSDQWPVQPGHRPQRCTGVALSVAAGLLGACLPGTGARIVALVGGPCTEGPGTIISKDLSDPVRSHKDLDKDAAPYYKKAVKFYDSIAKQLVAQGHVLDLFASALDQVGVAEMKVAVESTGGLVVLSESFGHSVFKDSFKRMFEDGEHSLGLCFNGTLEINCSKDIKIQGVIGPCSSLEKKGPNVADTVIGEGNTSAWKLCGLDKSTCLTVFFDLSSTGSTAPGALNQQLYLQFITRYQNSEGKSLARVTTLTRQWVDTAVSTENLVQGFDQETAAVVMARLTSLKMETEEGFDATRWLDRTLIRLCSKFGEYRKDDPTSFTLKPYLTLFPQFMFNLRRSQFVQVFNNSPDETAYFRMLLNRENISNAIVMIQPSLTSYSFNSGPQAALLDVASIAADKILLLDAYFSVVVFHGMTISQWRNMGYHHQPEHEAFAQLLQAPQEDSQMLVRERFPVPRLVVCDQHGSQARFLLAKLNPSATYNNANEMSAGSDIIFTDDVSLQVFIEHLQKLAVQS.

Zn(2+) contacts are provided by C65, C68, C87, and C90. Positions 65-90 (CKTCKALLNAFARVDFAAMNWVCPFC) are zinc finger-like.

Belongs to the SEC23/SEC24 family. SEC23 subfamily. In terms of assembly, component of the coat protein complex II (COPII), composed of at least five proteins: the Sec23/24 complex, the Sec13/31 complex and Sar1. Interacts with SEC24A.

The protein localises to the cytoplasmic vesicle. It localises to the COPII-coated vesicle membrane. Its subcellular location is the endoplasmic reticulum membrane. It is found in the membrane. Its function is as follows. Component of the coat protein complex II (COPII) which promotes the formation of transport vesicles from the endoplasmic reticulum (ER). The coat has two main functions, the physical deformation of the endoplasmic reticulum membrane into vesicles and the selection of cargo molecules. In Arabidopsis thaliana (Mouse-ear cress), this protein is Protein transport protein SEC23 F.